A 242-amino-acid polypeptide reads, in one-letter code: Biosynthetic peptidoglycan transglycosylase (242 aa).

Residues 19 to 39 (ILAALAVFWGGGIALFSVVPV) form a helical membrane-spanning segment.

This sequence belongs to the glycosyltransferase 51 family.

The protein localises to the cell inner membrane. It carries out the reaction [GlcNAc-(1-&gt;4)-Mur2Ac(oyl-L-Ala-gamma-D-Glu-L-Lys-D-Ala-D-Ala)](n)-di-trans,octa-cis-undecaprenyl diphosphate + beta-D-GlcNAc-(1-&gt;4)-Mur2Ac(oyl-L-Ala-gamma-D-Glu-L-Lys-D-Ala-D-Ala)-di-trans,octa-cis-undecaprenyl diphosphate = [GlcNAc-(1-&gt;4)-Mur2Ac(oyl-L-Ala-gamma-D-Glu-L-Lys-D-Ala-D-Ala)](n+1)-di-trans,octa-cis-undecaprenyl diphosphate + di-trans,octa-cis-undecaprenyl diphosphate + H(+). Its pathway is cell wall biogenesis; peptidoglycan biosynthesis. Its function is as follows. Peptidoglycan polymerase that catalyzes glycan chain elongation from lipid-linked precursors. This is Biosynthetic peptidoglycan transglycosylase from Salmonella newport (strain SL254).